Reading from the N-terminus, the 515-residue chain is Hopanoid C-3 methylase (515 aa).

One can recognise a B12-binding domain in the interval 8–141 (PSPLMYTKVF…ETLARRGNID (134 aa)). Positions 181–395 (GTLDPCASIE…DIQHAVLPTR (215 aa)) constitute a Radical SAM core domain. The [4Fe-4S] cluster site is built by Cys195, Cys199, and Cys202.

It belongs to the radical SAM superfamily. It depends on [4Fe-4S] cluster as a cofactor.

In terms of biological role, required for methylation of hopanoids at the C-3 position. The protein is Hopanoid C-3 methylase of Methylococcus capsulatus (strain ATCC 33009 / NCIMB 11132 / Bath).